We begin with the raw amino-acid sequence, 133 residues long: Large ribosomal subunit protein uL16 (133 aa).

Belongs to the universal ribosomal protein uL16 family. In terms of assembly, part of the 50S ribosomal subunit.

Binds 23S rRNA and is also seen to make contacts with the A and possibly P site tRNAs. The sequence is that of Large ribosomal subunit protein uL16 from Blochmanniella floridana.